A 197-amino-acid chain; its full sequence is Molybdenum cofactor guanylyltransferase (197 aa).

GTP is bound by residues 10–12, Lys23, Asn51, Asp69, and Asp99; that span reads LAG. Position 99 (Asp99) interacts with Mg(2+).

This sequence belongs to the MobA family. As to quaternary structure, monomer. The cofactor is Mg(2+).

Its subcellular location is the cytoplasm. The catalysed reaction is Mo-molybdopterin + GTP + H(+) = Mo-molybdopterin guanine dinucleotide + diphosphate. In terms of biological role, transfers a GMP moiety from GTP to Mo-molybdopterin (Mo-MPT) cofactor (Moco or molybdenum cofactor) to form Mo-molybdopterin guanine dinucleotide (Mo-MGD) cofactor. This is Molybdenum cofactor guanylyltransferase from Shewanella sp. (strain ANA-3).